The following is a 544-amino-acid chain: Membrane protein insertase YidC (544 aa).

The next 5 membrane-spanning stretches (helical) occupy residues L13 to L33, W343 to F363, L409 to V429, L461 to L481, and M506 to I526.

Belongs to the OXA1/ALB3/YidC family. Type 1 subfamily. Interacts with the Sec translocase complex via SecD. Specifically interacts with transmembrane segments of nascent integral membrane proteins during membrane integration.

It is found in the cell inner membrane. Its function is as follows. Required for the insertion and/or proper folding and/or complex formation of integral membrane proteins into the membrane. Involved in integration of membrane proteins that insert both dependently and independently of the Sec translocase complex, as well as at least some lipoproteins. Aids folding of multispanning membrane proteins. This is Membrane protein insertase YidC from Borreliella burgdorferi (strain ATCC 35210 / DSM 4680 / CIP 102532 / B31) (Borrelia burgdorferi).